Reading from the N-terminus, the 152-residue chain is Catabolic 3-dehydroquinase 1 (152 aa).

The active-site Proton acceptor is Y24. Positions 75, 81, and 88 each coordinate substrate. The Proton donor role is filled by H101. Substrate-binding positions include 102 to 103 (VS) and R112.

This sequence belongs to the type-II 3-dehydroquinase family. Homododecamer. Adopts a ring-like structure, composed of an arrangement of two hexameric rings stacked on top of one another.

The catalysed reaction is 3-dehydroquinate = 3-dehydroshikimate + H2O. It functions in the pathway aromatic compound metabolism; 3,4-dihydroxybenzoate biosynthesis; 3,4-dihydroxybenzoate from 3-dehydroquinate: step 1/2. Is involved in the catabolism of quinate. Allows the utilization of quinate as carbon source via the beta-ketoadipate pathway. This is Catabolic 3-dehydroquinase 1 from Aspergillus terreus (strain NIH 2624 / FGSC A1156).